The chain runs to 598 residues: IQ calmodulin-binding motif-containing protein 1 (598 aa).

An interaction with BBS1, BBS8 and BBS9 region spans residues 1-157 (MKPTGTDPRI…SLFWLLGGHV (157 aa)). The tract at residues 287-598 (QEVEEQKLHQ…NLFIGGTKPP (312 aa)) is interaction with CEP290, BBS1, BBS2, BBS4, BBS5, BBS7, BBS8 and BBS9. IQ domains are found at residues 294–317 (LHQAACLIQAYWKGFQTRKRLKKL), 318–338 (PSAVIALQRSFRSKRSKMLLE), 387–416 (EEKSALIIQKHWRGYRERKNFHQQRQSLIE), and 417–437 (YKAAVTLQRAALKFLAKCRKK). The stretch at 336 to 373 (LLEINRQKEEEDLKLQLQLQRQRAMRLSRELQLSMLEI) forms a coiled coil. An interaction with BBS1, BBS2, BBS4, BBS7, BBS8 and BBS9 region spans residues 530-598 (AEGKEPELFL…NLFIGGTKPP (69 aa)). A Phosphoserine modification is found at serine 572.

Interacts with CEP290/NPHP6; IQCB1/NPHP5 and CEP290 are proposed to form a functional NPHP5-6 module/NPHP6; localized to the centrosome. Interacts with calmodulin, ATXN10. Interacts with NPHP1, INVS, NPHP4 and RPGRIP1L; these interactions likely require additional interactors. Associates with the BBSome complex; interacts with BBS1, BBS2, BBS4, BBS5, BBS7, BBS8 and BBS9. In terms of tissue distribution, ubiquitously expressed in fetal and adult tissues. Localized to the outer segments and connecting cilia of photoreceptor cells. Up-regulated in a number of primary colorectal and gastric tumors.

The protein resides in the cytoplasm. The protein localises to the cytoskeleton. It localises to the microtubule organizing center. Its subcellular location is the centrosome. It is found in the centriole. Involved in ciliogenesis. The function in an early step in cilia formation depends on its association with CEP290/NPHP6. Involved in regulation of the BBSome complex integrity, specifically for presence of BBS2 and BBS5 in the complex, and in ciliary targeting of selected BBSome cargos. May play a role in controlling entry of the BBSome complex to cilia possibly implicating CEP290/NPHP6. In Homo sapiens (Human), this protein is IQ calmodulin-binding motif-containing protein 1 (IQCB1).